Here is a 531-residue protein sequence, read N- to C-terminus: Light-independent protochlorophyllide reductase subunit B (531 aa).

Asp-36 contributes to the [4Fe-4S] cluster binding site. Asp-296 (proton donor) is an active-site residue. Residue 431 to 432 (GM) coordinates substrate.

Belongs to the ChlB/BchB/BchZ family. As to quaternary structure, protochlorophyllide reductase is composed of three subunits; ChlL, ChlN and ChlB. Forms a heterotetramer of two ChlB and two ChlN subunits. The cofactor is [4Fe-4S] cluster.

It localises to the plastid. The protein localises to the chloroplast. The enzyme catalyses chlorophyllide a + oxidized 2[4Fe-4S]-[ferredoxin] + 2 ADP + 2 phosphate = protochlorophyllide a + reduced 2[4Fe-4S]-[ferredoxin] + 2 ATP + 2 H2O. It participates in porphyrin-containing compound metabolism; chlorophyll biosynthesis (light-independent). Functionally, component of the dark-operative protochlorophyllide reductase (DPOR) that uses Mg-ATP and reduced ferredoxin to reduce ring D of protochlorophyllide (Pchlide) to form chlorophyllide a (Chlide). This reaction is light-independent. The NB-protein (ChlN-ChlB) is the catalytic component of the complex. This chain is Light-independent protochlorophyllide reductase subunit B, found in Nephroselmis olivacea (Green alga).